Reading from the N-terminus, the 149-residue chain is Nucleoside diphosphate kinase (149 aa).

Residues lysine 9, phenylalanine 57, arginine 85, threonine 91, arginine 102, and asparagine 112 each contribute to the ATP site. The active-site Pros-phosphohistidine intermediate is the histidine 115.

Belongs to the NDK family. Mg(2+) is required as a cofactor.

The protein localises to the cytoplasm. It carries out the reaction a 2'-deoxyribonucleoside 5'-diphosphate + ATP = a 2'-deoxyribonucleoside 5'-triphosphate + ADP. The catalysed reaction is a ribonucleoside 5'-diphosphate + ATP = a ribonucleoside 5'-triphosphate + ADP. Functionally, major role in the synthesis of nucleoside triphosphates other than ATP. The ATP gamma phosphate is transferred to the NDP beta phosphate via a ping-pong mechanism, using a phosphorylated active-site intermediate. The protein is Nucleoside diphosphate kinase of Methanospirillum hungatei JF-1 (strain ATCC 27890 / DSM 864 / NBRC 100397 / JF-1).